The sequence spans 162 residues: Peptidyl-prolyl cis-trans isomerase (162 aa).

In terms of domain architecture, PPIase cyclophilin-type spans 5–161 (FFDVQFGGDA…TTIKIVDSGV (157 aa)).

It belongs to the cyclophilin-type PPIase family. PPIase A subfamily.

It catalyses the reaction [protein]-peptidylproline (omega=180) = [protein]-peptidylproline (omega=0). Its activity is regulated as follows. Binds cyclosporin A (CsA). CsA mediates some of its effects via an inhibitory action on PPIase. Its function is as follows. PPIases accelerate the folding of proteins. It catalyzes the cis-trans isomerization of proline imidic peptide bonds in oligopeptides. The protein is Peptidyl-prolyl cis-trans isomerase of Paramecium primaurelia.